The primary structure comprises 381 residues: Short-chain dehydrogenase anuD (381 aa).

NADP(+) is bound by residues isoleucine 84, lysine 109, aspartate 133, asparagine 158, tyrosine 244, and lysine 248. Tyrosine 244 functions as the Proton acceptor in the catalytic mechanism. Tyrosine 244 acts as the Proton donor in catalysis. Residue lysine 248 is the Lowers pKa of active site Tyr of the active site.

This sequence belongs to the short-chain dehydrogenases/reductases (SDR) family.

In terms of biological role, highly reducing polyketide synthase; part of the gene cluster that mediates the biosynthesis of annullatin D, an alkylated aromatic polyketide with a fused dihydrobenzofuran lactone ring system that exhibits potent agonistic activities toward the cannabinoid receptors. AnuD does not seem to play a role within the pathway. The annullatin backbone 2-hydroxymethyl-3-pentylphenol is assembled from one acetyl-CoA starter unit and 5 malonyl-CoA elongation units by cooperation of the highly reducing polyketide synthase anuA, the short-chain dehydrogenase anuB and the oxidoreductase anuC, before being hydroxylated at the C-5 alkyl chain by the cytochrome P450 monooxygenase anuE to form (8S)-annullatin E. The prenyltransferase anuH subsequently installs one isoprenyl group at the benzene ring to form (8S)-annullatin J. Enzymatic or nonenzymatic dihydro-benzofuran ring formation between the prenyl and the phenolic hydroxyl groups in (8S)-annullatin J results in two diastereomers (2S,9S)-annullatin H and compound 12. The intermediate (2S,9S)-annullatin H is then converted to (2S,9S)-annullatin D by the FAD-linked oxidoreductase anuG-catalyzed five-member lactone ring formation. The isomer 12 acts as a substrate for the short-chain dehydrogenase anuF and is oxidized to (2R)-annullatin F, which is subsequently acetylated by an acetyltransferase leading to (2R)-annullatin G formation. The remaining enzymes identified within the cluster, anuD, anuI and anuJ, seem not to be involved in annullatin biosynthesis. In Penicillium roqueforti (strain FM164), this protein is Short-chain dehydrogenase anuD.